The following is a 263-amino-acid chain: Hydroxyethylthiazole kinase (263 aa).

A substrate-binding site is contributed by Met-45. Residues Arg-121 and Ser-167 each contribute to the ATP site. Position 194 (Gly-194) interacts with substrate.

Belongs to the Thz kinase family. It depends on Mg(2+) as a cofactor.

The enzyme catalyses 5-(2-hydroxyethyl)-4-methylthiazole + ATP = 4-methyl-5-(2-phosphooxyethyl)-thiazole + ADP + H(+). The protein operates within cofactor biosynthesis; thiamine diphosphate biosynthesis; 4-methyl-5-(2-phosphoethyl)-thiazole from 5-(2-hydroxyethyl)-4-methylthiazole: step 1/1. In terms of biological role, catalyzes the phosphorylation of the hydroxyl group of 4-methyl-5-beta-hydroxyethylthiazole (THZ). The protein is Hydroxyethylthiazole kinase of Vibrio campbellii (strain ATCC BAA-1116).